Reading from the N-terminus, the 193-residue chain is Ancillary SecYEG translocon subunit (193 aa).

The Cytoplasmic segment spans residues 1–8 (MLNISKKN). Residues 9-29 (IIFFILFFLIISLILFNWKYF) form a helical membrane-spanning segment. Over 30 to 193 (SLVNKENLES…MKLNELKEQN (164 aa)) the chain is Periplasmic.

Belongs to the YfgM family. In terms of assembly, interacts with the SecYEG translocon. Forms a complex with PpiD.

The protein resides in the cell inner membrane. Its function is as follows. May mediate protein transfer from the SecYEG translocon to the periplasmic chaperone network via its periplasmic C-terminal region. The chain is Ancillary SecYEG translocon subunit from Buchnera aphidicola subsp. Acyrthosiphon pisum (strain APS) (Acyrthosiphon pisum symbiotic bacterium).